Reading from the N-terminus, the 208-residue chain is Ribonuclease HII (208 aa).

The RNase H type-2 domain occupies 1 to 205; that stretch reads MIVVGIDEAG…LQEIAPNYYI (205 aa). Residues Asp-7, Glu-8, and Asp-104 each coordinate a divalent metal cation.

Belongs to the RNase HII family. It depends on Mn(2+) as a cofactor. The cofactor is Mg(2+).

It is found in the cytoplasm. It carries out the reaction Endonucleolytic cleavage to 5'-phosphomonoester.. In terms of biological role, endonuclease that specifically degrades the RNA of RNA-DNA hybrids. The protein is Ribonuclease HII of Sulfurisphaera tokodaii (strain DSM 16993 / JCM 10545 / NBRC 100140 / 7) (Sulfolobus tokodaii).